We begin with the raw amino-acid sequence, 242 residues long: DNA repair protein RecO (242 aa).

It belongs to the RecO family. In terms of assembly, monomer.

Its function is as follows. Involved in DNA repair and RecF pathway recombination. This Shigella boydii serotype 18 (strain CDC 3083-94 / BS512) protein is DNA repair protein RecO.